Consider the following 218-residue polypeptide: Phosphoglycolate phosphatase (218 aa).

Residue Asp7 is the Nucleophile of the active site. Positions 7, 9, and 167 each coordinate Mg(2+).

This sequence belongs to the HAD-like hydrolase superfamily. CbbY/CbbZ/Gph/YieH family. Requires Mg(2+) as cofactor.

It carries out the reaction 2-phosphoglycolate + H2O = glycolate + phosphate. Its pathway is organic acid metabolism; glycolate biosynthesis; glycolate from 2-phosphoglycolate: step 1/1. Specifically catalyzes the dephosphorylation of 2-phosphoglycolate. Is involved in the dissimilation of the intracellular 2-phosphoglycolate formed during the DNA repair of 3'-phosphoglycolate ends, a major class of DNA lesions induced by oxidative stress. This chain is Phosphoglycolate phosphatase, found in Cereibacter sphaeroides (Rhodobacter sphaeroides).